We begin with the raw amino-acid sequence, 302 residues long: DDRGK domain-containing protein 1 (302 aa).

Residues 1–21 form a helical membrane-spanning segment; sequence MDPLLLGSVGVLVLAVTLIIW. The Cytoplasmic segment spans residues 22–302; sequence RLLKLQWDEK…IRLETPSAAE (281 aa). The segment at 101–178 is disordered; sequence EYDEDGKKIG…EREEKERKEH (78 aa). The segment covering 118-178 has biased composition (basic and acidic residues); the sequence is QAKEEKRQMR…EREEKERKEH (61 aa).

It belongs to the DDRGK1 family.

The protein localises to the endoplasmic reticulum membrane. Functionally, substrate adapter for ufmylation, the covalent attachment of the ubiquitin-like modifier ufm-1 to substrate proteins. The protein is DDRGK domain-containing protein 1 of Caenorhabditis elegans.